Consider the following 242-residue polypeptide: Type III pantothenate kinase (242 aa).

ATP is bound at residue 5–12 (DLGNTRLK). Substrate-binding positions include tyrosine 94 and 100-103 (GCDR). Aspartate 102 acts as the Proton acceptor in catalysis. Threonine 124 is an ATP binding site. Threonine 175 lines the substrate pocket.

It belongs to the type III pantothenate kinase family. Homodimer. NH4(+) serves as cofactor. It depends on K(+) as a cofactor.

The protein localises to the cytoplasm. It catalyses the reaction (R)-pantothenate + ATP = (R)-4'-phosphopantothenate + ADP + H(+). It functions in the pathway cofactor biosynthesis; coenzyme A biosynthesis; CoA from (R)-pantothenate: step 1/5. Its function is as follows. Catalyzes the phosphorylation of pantothenate (Pan), the first step in CoA biosynthesis. This is Type III pantothenate kinase from Psychrobacter arcticus (strain DSM 17307 / VKM B-2377 / 273-4).